The sequence spans 49 residues: Large ribosomal subunit protein bL33A (49 aa).

This sequence belongs to the bacterial ribosomal protein bL33 family.

This is Large ribosomal subunit protein bL33A from Limosilactobacillus reuteri subsp. reuteri (strain JCM 1112) (Lactobacillus reuteri).